We begin with the raw amino-acid sequence, 377 residues long: tRNA-specific 2-thiouridylase MnmA (377 aa).

ATP contacts are provided by residues 18 to 25 (AMSGGVDS) and Met-44. Cys-113 serves as the catalytic Nucleophile. An intrachain disulfide couples Cys-113 to Cys-210. An ATP-binding site is contributed by Gly-137. Positions 159 to 161 (RDQ) are interaction with tRNA. Cys-210 serves as the catalytic Cysteine persulfide intermediate.

It belongs to the MnmA/TRMU family.

It is found in the cytoplasm. The catalysed reaction is S-sulfanyl-L-cysteinyl-[protein] + uridine(34) in tRNA + AH2 + ATP = 2-thiouridine(34) in tRNA + L-cysteinyl-[protein] + A + AMP + diphosphate + H(+). Functionally, catalyzes the 2-thiolation of uridine at the wobble position (U34) of tRNA, leading to the formation of s(2)U34. This is tRNA-specific 2-thiouridylase MnmA from Rhodospirillum rubrum (strain ATCC 11170 / ATH 1.1.1 / DSM 467 / LMG 4362 / NCIMB 8255 / S1).